Consider the following 247-residue polypeptide: MPITVNKLRHDTHHFFYKKIGAIFFISIFATFMNILIDMFIKPDMHIVSIMENNKFINASSLLEFIQNMNLNEKHELLKYSILKIMESLISKTTLLGSIIILISVVSEPKKKSIVSSIRTFFLFFPSLFILNFLTTFIIQIGFMLLIIPGILLSIILSLSPIILFFKKNRLLDSIRLSMYISWKYIKIIGPGVLFWMCGKFILTMLLAHFSLINKNVLFLISNISMNILFSILIIYLFRFYMIFLRS.

6 helical membrane-spanning segments follow: residues 20-40 (IGAI…IDMF), 85-105 (IMES…LISV), 114-134 (IVSS…LNFL), 137-157 (FIIQ…SIIL), 188-208 (IIGP…MLLA), and 218-238 (LFLI…IYLF).

Belongs to the UPF0259 family.

The protein resides in the cell membrane. The chain is UPF0259 membrane protein BUAP5A_271 from Buchnera aphidicola subsp. Acyrthosiphon pisum (strain 5A).